Consider the following 246-residue polypeptide: NAD-dependent protein deacetylase (246 aa).

The Deacetylase sirtuin-type domain occupies 1–246 (MKKPDIQQLK…VIEEIVNSNS (246 aa)). Residues Ala25, Phe36, Arg37, Gln106, Ile108, Asp109, and His124 each contribute to the NAD(+) site. Position 36 (Phe36) interacts with nicotinamide. Positions 108 and 109 each coordinate nicotinamide. His124 functions as the Proton acceptor in the catalytic mechanism. Zn(2+) contacts are provided by Cys132, Cys135, Cys152, and Cys155. The NAD(+) site is built by Ser193, Ser194, Asn216, and Asp233.

This sequence belongs to the sirtuin family. Class U subfamily. Requires Zn(2+) as cofactor.

Its subcellular location is the cytoplasm. It carries out the reaction N(6)-acetyl-L-lysyl-[protein] + NAD(+) + H2O = 2''-O-acetyl-ADP-D-ribose + nicotinamide + L-lysyl-[protein]. Functionally, NAD-dependent protein deacetylase which modulates the activities of several enzymes which are inactive in their acetylated form. The chain is NAD-dependent protein deacetylase from Staphylococcus epidermidis (strain ATCC 12228 / FDA PCI 1200).